The primary structure comprises 317 residues: DNA repair nuclease/redox regulator APEX1 (317 aa).

The interval 1 to 58 is disordered; that stretch reads MPKRGKKAAADDGEEPKSEPETKKSKGAAKKTEKEAAGEGPVLYEDPPDQKTSPSGKS. Positions 2–32 are necessary for interaction with YBX1, binding to RNA, association together with NPM1 to rRNA, endoribonuclease activity on abasic RNA and localization in the nucleoli; the sequence is PKRGKKAAADDGEEPKSEPETKKSKGAAKKT. An N6-acetyllysine; by EP300 mark is found at lysine 6 and lysine 7. Positions 8–12 match the Nuclear localization signal (NLS) motif; sequence AAADD. Over residues 15-37 the composition is skewed to basic and acidic residues; it reads EPKSEPETKKSKGAAKKTEKEAA. Serine 18 is subject to Phosphoserine. Residues 22–32 form a necessary for interaction with NPM1 and for efficient rRNA binding region; the sequence is TKKSKGAAKKT. Lysine 26, lysine 30, lysine 31, and lysine 34 each carry N6-acetyllysine. Residue serine 53 is modified to Phosphoserine. A Nuclear export signal (NES) motif is present at residues 63 to 79; sequence ICSWNVDGLRAWIKKKG. Cysteine 64 carries the S-nitrosocysteine; alternate modification. An intrachain disulfide couples cysteine 64 to cysteine 92. Aspartate 69 lines the Mg(2+) pocket. S-nitrosocysteine; alternate is present on cysteine 92. Residue glutamate 95 coordinates Mg(2+). Residue tyrosine 170 is part of the active site. Lysine 196 carries the post-translational modification N6-acetyllysine. Positions 209 and 211 each coordinate Mg(2+). Residue aspartate 209 is the Proton donor/acceptor of the active site. Phosphothreonine; by CDK5 is present on threonine 232. Residues 288-317 form a mitochondrial targeting sequence (MTS) region; sequence HSLLPALCDSKIRSKALGSDHCPITLYLAL. Residue aspartate 307 coordinates Mg(2+). Cysteine 309 carries the S-nitrosocysteine modification.

It belongs to the DNA repair enzymes AP/ExoA family. As to quaternary structure, monomer. Homodimer; disulfide-linked. Component of the SET complex, composed of at least APEX1, SET, ANP32A, HMGB2, NME1 and TREX1. Associates with the dimer XRCC5/XRCC6 in a DNA-dependent manner. Interacts with SIRT1; the interaction is increased in the context of genotoxic stress. Interacts with HDAC1, HDAC2 and HDAC3; the interactions are not dependent on the APEX1 acetylation status. Interacts with XRCC1; the interaction is induced by SIRT1 and increased with the APEX1 acetylated form. Interacts with NPM1 (via N-terminal domain); the interaction is RNA-dependent and decreases in hydrogen peroxide-damaged cells. Interacts (via N-terminus) with YBX1 (via C-terminus); the interaction is increased in presence of APEX1 acetylated at Lys-6 and Lys-7. Interacts with HNRNPL; the interaction is DNA-dependent. Interacts (via N-terminus) with KPNA1 and KPNA2. Interacts with TXN; the interaction stimulates the FOS/JUN AP-1 complex DNA-binding activity in a redox-dependent manner. Interacts with GZMA, KRT8, MDM2, POLB, PRDX6, PRPF19, RPLP0, TOMM20 and WDR77. Binds to CDK5. Mg(2+) is required as a cofactor. Requires Mn(2+) as cofactor. In terms of processing, phosphorylated. Phosphorylation by kinase PKC or casein kinase CK2 results in enhanced redox activity that stimulates binding of the FOS/JUN AP-1 complex to its cognate binding site. AP-endodeoxyribonuclease activity is not affected by CK2-mediated phosphorylation. Phosphorylation of Thr-232 by CDK5 in response to MPP(+)/MPTP (1-methyl-4-phenylpyridinium) reduces AP-endodeoxyribonuclease activity resulting in accumulation of DNA damage and contributing to neuronal death. Acetylated on Lys-6 and Lys-7. Acetylation is increased by the transcriptional coactivator EP300 acetyltransferase, genotoxic agents like H(2)O(2) and methyl methanesulfonate (MMS). Acetylation increases its binding affinity to the negative calcium response element (nCaRE) DNA promoter. The acetylated form induces a stronger binding of YBX1 to the Y-box sequence in the MDR1 promoter than the unacetylated form. Deacetylated on lysines. Lys-6 and Lys-7 are deacetylated by SIRT1. Post-translationally, cleaved at Lys-30 by granzyme A to create the mitochondrial form; leading in reduction of binding to DNA, AP endodeoxyribonuclease activity, redox activation of transcription factors and to enhanced cell death. Cleaved by granzyme K; leading to intracellular ROS accumulation and enhanced cell death after oxidative stress. In terms of processing, cys-64 and Cys-92 are nitrosylated in response to nitric oxide (NO) and lead to the exposure of the nuclear export signal (NES). Ubiquitinated by MDM2; leading to translocation to the cytoplasm and proteasomal degradation. In terms of tissue distribution, expressed in both resting and stimulated B cells stimulated to switch (at protein level).

It is found in the nucleus. It localises to the nucleolus. Its subcellular location is the nucleus speckle. The protein resides in the endoplasmic reticulum. The protein localises to the cytoplasm. It is found in the mitochondrion. The enzyme catalyses a deoxyribonucleotide-2'-deoxyribose-5'-monophosphate-DNA + H2O = a 5'-end 2'-deoxyribose-5'-monophosphate-DNA + a 3'-end 2'-deoxyribonucleotide-DNA + H(+). The catalysed reaction is Exonucleolytic cleavage in the 3'- to 5'-direction to yield nucleoside 5'-phosphates.. It carries out the reaction a 3'-end 2'-deoxyribonucleotide-3'-phosphoglycolate-DNA + H2O = 2-phosphoglycolate + a 3'-end 2'-deoxyribonucleotide-DNA + H(+). It catalyses the reaction a 3'-end 2'-deoxyribonucleotide-8-oxoguanine-DNA + H2O = 8-oxo-dGMP + a 3'-end 2'-deoxyribonucleotide-DNA + H(+). With respect to regulation, NPM1 stimulates endodeoxyribonuclease activity on double-stranded DNA with AP sites, but inhibits endoribonuclease activity on single-stranded RNA containing AP sites. In terms of biological role, multifunctional protein that plays a central role in the cellular response to oxidative stress. The two major activities of APEX1 are DNA repair and redox regulation of transcriptional factors. Functions as an apurinic/apyrimidinic (AP) endodeoxyribonuclease in the base excision repair (BER) pathway of DNA lesions induced by oxidative and alkylating agents. Initiates repair of AP sites in DNA by catalyzing hydrolytic incision of the phosphodiester backbone immediately adjacent to the damage, generating a single-strand break with 5'-deoxyribose phosphate and 3'-hydroxyl ends. Also incises at AP sites in the DNA strand of DNA/RNA hybrids, single-stranded DNA regions of R-loop structures, and single-stranded RNA molecules. Operates at switch sites of immunoglobulin (Ig) constant regions where it mediates Ig isotype class switch recombination. Processes AP sites induced by successive action of AICDA and UNG. Generates staggered nicks in opposite DNA strands resulting in the formation of double-strand DNA breaks that are finally resolved via non-homologous end joining repair pathway. Has 3'-5' exodeoxyribonuclease activity on mismatched deoxyribonucleotides at the 3' termini of nicked or gapped DNA molecules during short-patch BER. Possesses DNA 3' phosphodiesterase activity capable of removing lesions (such as phosphoglycolate and 8-oxoguanine) blocking the 3' side of DNA strand breaks. Also acts as an endoribonuclease involved in the control of single-stranded RNA metabolism. Plays a role in regulating MYC mRNA turnover by preferentially cleaving in between UA and CA dinucleotides of the MYC coding region determinant (CRD). In association with NMD1, plays a role in the rRNA quality control process during cell cycle progression. Acts as a loading factor for POLB onto non-incised AP sites in DNA and stimulates the 5'-terminal deoxyribose 5'-phosphate (dRp) excision activity of POLB. Exerts reversible nuclear redox activity to regulate DNA binding affinity and transcriptional activity of transcriptional factors by controlling the redox status of their DNA-binding domain, such as the FOS/JUN AP-1 complex after exposure to IR. Involved in calcium-dependent down-regulation of parathyroid hormone (PTH) expression by binding to negative calcium response elements (nCaREs). Together with HNRNPL or the dimer XRCC5/XRCC6, associates with nCaRE, acting as an activator of transcriptional repression. May also play a role in the epigenetic regulation of gene expression by participating in DNA demethylation. Stimulates the YBX1-mediated MDR1 promoter activity, when acetylated at Lys-6 and Lys-7, leading to drug resistance. Plays a role in protection from granzyme-mediated cellular repair leading to cell death. Binds DNA and RNA. Associates, together with YBX1, on the MDR1 promoter. Together with NPM1, associates with rRNA. In Mus musculus (Mouse), this protein is DNA repair nuclease/redox regulator APEX1 (Apex1).